The following is a 308-amino-acid chain: tRNA dimethylallyltransferase (308 aa).

14-21 (GPTASGKT) lines the ATP pocket. 16 to 21 (TASGKT) provides a ligand contact to substrate. Interaction with substrate tRNA stretches follow at residues 39–42 (DSAL), 163–167 (QRLAR), and 244–249 (RCVGYR).

Belongs to the IPP transferase family. Monomer. Mg(2+) is required as a cofactor.

It catalyses the reaction adenosine(37) in tRNA + dimethylallyl diphosphate = N(6)-dimethylallyladenosine(37) in tRNA + diphosphate. In terms of biological role, catalyzes the transfer of a dimethylallyl group onto the adenine at position 37 in tRNAs that read codons beginning with uridine, leading to the formation of N6-(dimethylallyl)adenosine (i(6)A). This Shewanella piezotolerans (strain WP3 / JCM 13877) protein is tRNA dimethylallyltransferase.